Consider the following 484-residue polypeptide: Bifunctional protein GlmU (484 aa).

The tract at residues 1-240 (MSNPHSSAVI…HRELAGVNDR (240 aa)) is pyrophosphorylase. Residues 12-15 (LAAG), lysine 26, glutamine 83, and 88-89 (GT) each bind UDP-N-acetyl-alpha-D-glucosamine. Aspartate 113 serves as a coordination point for Mg(2+). UDP-N-acetyl-alpha-D-glucosamine contacts are provided by glycine 150, glutamate 165, asparagine 180, and asparagine 238. Asparagine 238 lines the Mg(2+) pocket. The tract at residues 241–261 (VQLAQAGKILNQRLVEDAMRN) is linker. Positions 262 to 484 (GATIVDPDTT…QAHAHETKEG (223 aa)) are N-acetyltransferase. Arginine 343 and lysine 361 together coordinate UDP-N-acetyl-alpha-D-glucosamine. Histidine 373 (proton acceptor) is an active-site residue. UDP-N-acetyl-alpha-D-glucosamine-binding residues include tyrosine 376 and asparagine 387. Acetyl-CoA is bound by residues alanine 390, 396–397 (NY), serine 415, and alanine 433. The disordered stretch occupies residues 461–484 (EKNRPGTPAADAARQAHAHETKEG).

In the N-terminal section; belongs to the N-acetylglucosamine-1-phosphate uridyltransferase family. It in the C-terminal section; belongs to the transferase hexapeptide repeat family. In terms of assembly, homotrimer. It depends on Mg(2+) as a cofactor.

The protein localises to the cytoplasm. The catalysed reaction is alpha-D-glucosamine 1-phosphate + acetyl-CoA = N-acetyl-alpha-D-glucosamine 1-phosphate + CoA + H(+). The enzyme catalyses N-acetyl-alpha-D-glucosamine 1-phosphate + UTP + H(+) = UDP-N-acetyl-alpha-D-glucosamine + diphosphate. It functions in the pathway nucleotide-sugar biosynthesis; UDP-N-acetyl-alpha-D-glucosamine biosynthesis; N-acetyl-alpha-D-glucosamine 1-phosphate from alpha-D-glucosamine 6-phosphate (route II): step 2/2. The protein operates within nucleotide-sugar biosynthesis; UDP-N-acetyl-alpha-D-glucosamine biosynthesis; UDP-N-acetyl-alpha-D-glucosamine from N-acetyl-alpha-D-glucosamine 1-phosphate: step 1/1. It participates in bacterial outer membrane biogenesis; LPS lipid A biosynthesis. Its function is as follows. Catalyzes the last two sequential reactions in the de novo biosynthetic pathway for UDP-N-acetylglucosamine (UDP-GlcNAc). The C-terminal domain catalyzes the transfer of acetyl group from acetyl coenzyme A to glucosamine-1-phosphate (GlcN-1-P) to produce N-acetylglucosamine-1-phosphate (GlcNAc-1-P), which is converted into UDP-GlcNAc by the transfer of uridine 5-monophosphate (from uridine 5-triphosphate), a reaction catalyzed by the N-terminal domain. This Corynebacterium diphtheriae (strain ATCC 700971 / NCTC 13129 / Biotype gravis) protein is Bifunctional protein GlmU.